The chain runs to 482 residues: tRNA sulfurtransferase (482 aa).

The THUMP domain occupies 61–165 (LAIRDALTRI…DDRLLLIKGR (105 aa)). Residues 183 to 184 (LI), lysine 265, glycine 287, and glutamine 296 each bind ATP. A disulfide bridge links cysteine 344 with cysteine 456. Residues 404 to 482 (FGANDVILDI…GFANVKVYRP (79 aa)) enclose the Rhodanese domain. Cysteine 456 acts as the Cysteine persulfide intermediate in catalysis.

This sequence belongs to the ThiI family.

It is found in the cytoplasm. It catalyses the reaction [ThiI sulfur-carrier protein]-S-sulfanyl-L-cysteine + a uridine in tRNA + 2 reduced [2Fe-2S]-[ferredoxin] + ATP + H(+) = [ThiI sulfur-carrier protein]-L-cysteine + a 4-thiouridine in tRNA + 2 oxidized [2Fe-2S]-[ferredoxin] + AMP + diphosphate. The catalysed reaction is [ThiS sulfur-carrier protein]-C-terminal Gly-Gly-AMP + S-sulfanyl-L-cysteinyl-[cysteine desulfurase] + AH2 = [ThiS sulfur-carrier protein]-C-terminal-Gly-aminoethanethioate + L-cysteinyl-[cysteine desulfurase] + A + AMP + 2 H(+). Its pathway is cofactor biosynthesis; thiamine diphosphate biosynthesis. Functionally, catalyzes the ATP-dependent transfer of a sulfur to tRNA to produce 4-thiouridine in position 8 of tRNAs, which functions as a near-UV photosensor. Also catalyzes the transfer of sulfur to the sulfur carrier protein ThiS, forming ThiS-thiocarboxylate. This is a step in the synthesis of thiazole, in the thiamine biosynthesis pathway. The sulfur is donated as persulfide by IscS. This is tRNA sulfurtransferase from Salmonella arizonae (strain ATCC BAA-731 / CDC346-86 / RSK2980).